Reading from the N-terminus, the 852-residue chain is 2-deoxy-glucose resistant protein 2 (852 aa).

Residues 1–18 (MFKSKTSTLSYDETPNSN) show a composition bias toward polar residues. Residues 1-60 (MFKSKTSTLSYDETPNSNEGDRNATPVNPKEKSQTKHLNIPGDRSRHSSIADSKRSSSRY) form a disordered region. 6 WD repeats span residues 171–210 (LFKN…VKRS), 278–316 (EHAL…SLKT), 318–358 (VHPD…VSYA), 426–471 (QHGP…ELFK), 476–515 (GSSR…LSAE), and 651–689 (GFSS…EIRK). Position 716 is a phosphoserine (serine 716). The tract at residues 723–748 (DERSSTEDNEFSTTPPSNTHNSRPSH) is disordered. Residues 733–744 (FSTTPPSNTHNS) are compositionally biased toward polar residues.

This sequence belongs to the WD repeat DGR2 family.

This Saccharomyces cerevisiae (strain ATCC 204508 / S288c) (Baker's yeast) protein is 2-deoxy-glucose resistant protein 2 (DGR2).